A 332-amino-acid chain; its full sequence is Glyceraldehyde-3-phosphate dehydrogenase (332 aa).

Residues 12–13 (RI), Asp-34, Lys-78, and Thr-120 each bind NAD(+). Residues 149–151 (SCT), Thr-180, 209–210 (TG), and Arg-232 contribute to the D-glyceraldehyde 3-phosphate site. The active-site Nucleophile is the Cys-150. Asn-314 lines the NAD(+) pocket.

Belongs to the glyceraldehyde-3-phosphate dehydrogenase family. In terms of assembly, homotetramer.

It is found in the cytoplasm. The catalysed reaction is D-glyceraldehyde 3-phosphate + phosphate + NAD(+) = (2R)-3-phospho-glyceroyl phosphate + NADH + H(+). It functions in the pathway carbohydrate degradation; glycolysis; pyruvate from D-glyceraldehyde 3-phosphate: step 1/5. Functionally, catalyzes the oxidative phosphorylation of glyceraldehyde 3-phosphate (G3P) to 1,3-bisphosphoglycerate (BPG) using the cofactor NAD. The first reaction step involves the formation of a hemiacetal intermediate between G3P and a cysteine residue, and this hemiacetal intermediate is then oxidized to a thioester, with concomitant reduction of NAD to NADH. The reduced NADH is then exchanged with the second NAD, and the thioester is attacked by a nucleophilic inorganic phosphate to produce BPG. The sequence is that of Glyceraldehyde-3-phosphate dehydrogenase (gapA) from Buchnera aphidicola subsp. Schizaphis graminum (strain Sg).